Consider the following 477-residue polypeptide: MVSAISEDSASATASGQCEVVKEELPAGNYILVAVEIDTTGRRLIDEIVQLAGYTSKGNFQQYIMPYMNLNQAARQRHQIRVISIGFYRMLKSMQTYKIIKSKSEVAALMDFLNWLETLLAKQPNKEGIVMLYHDDRKFIPYMILEALKKYSLIDRFNRSVKAFANTCPMAKTFLGKHGIKNCGLRKLSMLLAKSKDGNSTKEDEHENPEGNSSITDNSGHKNQKQGAFEGSANVRAKMVYEMALQLIESESTESPESFESPESSESSEAEVKLLNAVRPFSQLLSSTILELKDQNHSLGRQNSFRPVFLNYFRTTLNYRVRAVKYRIGLAEHGFTLKSLKAIWSDKRKPGLELVLTAIDSLKTEETAELLDLLDSYYDPSKTTIKPRCKRSGNGTRRRNRAKGAASSKNGAIGAGGDNSVPDSATKPGGRPRRKRNNIRNNILGPQNTEKGSPKAEMKTSTPKSMSIKPPSEFADI.

The span at 196–209 (KDGNSTKEDEHENP) shows a compositional bias: basic and acidic residues. Disordered stretches follow at residues 196–226 (KDGN…NQKQ) and 384–477 (TIKP…FADI). Basic residues predominate over residues 385-402 (IKPRCKRSGNGTRRRNRA).

In terms of biological role, ensures the proper localization of the mRNA of the bicoid gene to the anterior regions of the oocyte thus playing a fundamental role in the establishment of the polarity of the oocyte. May bind the bcd mRNA. The protein is Maternal protein exuperantia-2 (exu2) of Drosophila pseudoobscura pseudoobscura (Fruit fly).